A 603-amino-acid polypeptide reads, in one-letter code: Elongation factor 4 (603 aa).

The region spanning 7–189 is the tr-type G domain; sequence VRIRNFCIIA…AVVERIPPPP (183 aa). Residues 19–24 and 136–139 contribute to the GTP site; these read DHGKST and NKID.

This sequence belongs to the TRAFAC class translation factor GTPase superfamily. Classic translation factor GTPase family. LepA subfamily.

It is found in the cell inner membrane. It carries out the reaction GTP + H2O = GDP + phosphate + H(+). Functionally, required for accurate and efficient protein synthesis under certain stress conditions. May act as a fidelity factor of the translation reaction, by catalyzing a one-codon backward translocation of tRNAs on improperly translocated ribosomes. Back-translocation proceeds from a post-translocation (POST) complex to a pre-translocation (PRE) complex, thus giving elongation factor G a second chance to translocate the tRNAs correctly. Binds to ribosomes in a GTP-dependent manner. This is Elongation factor 4 from Trichormus variabilis (strain ATCC 29413 / PCC 7937) (Anabaena variabilis).